We begin with the raw amino-acid sequence, 398 residues long: Dual specificity protein phosphatase 4 (398 aa).

The residue at position 2 (Val-2) is an N-acetylvaline. One can recognise a Rhodanese domain in the interval 45–163; sequence SGGKCLLLDC…FSSEYPEFCS (119 aa). A Tyrosine-protein phosphatase domain is found at 199 to 340; the sequence is GPVEILPFLY…LLQFESQVLT (142 aa). The Phosphocysteine intermediate role is filled by Cys-284. Phosphoserine; by MAPK is present on residues Ser-390 and Ser-395.

The protein belongs to the protein-tyrosine phosphatase family. Non-receptor class dual specificity subfamily. As to quaternary structure, hollow spherical complex composed of 24 subunits with pseudooctahedral symmetry, has a tetramer as the basic unit. Phosphorylation in the C-terminus by ERK1/2 inhibits proteasomal degradation and stabilizes the protein.

Its subcellular location is the nucleus. It catalyses the reaction O-phospho-L-tyrosyl-[protein] + H2O = L-tyrosyl-[protein] + phosphate. It carries out the reaction O-phospho-L-seryl-[protein] + H2O = L-seryl-[protein] + phosphate. The catalysed reaction is O-phospho-L-threonyl-[protein] + H2O = L-threonyl-[protein] + phosphate. Regulates mitogenic signal transduction by dephosphorylating both Thr and Tyr residues on MAP kinases ERK1 and ERK2. The protein is Dual specificity protein phosphatase 4 (Dusp4) of Mus musculus (Mouse).